A 305-amino-acid chain; its full sequence is DNA-directed RNA polymerase 35 kDa subunit (305 aa).

Belongs to the poxviridae DNA-directed RNA polymerase 35 kDa subunit family. The DNA-dependent RNA polymerase used for intermediate and late genes expression consists of eight subunits 147 kDa, 133 kDa, 35 kDa, 30 kDa, 22 kDa, 19 kDa, 18 kDa and 7 kDa totalling more than 500 kDa in mass. The same holoenzyme, with the addition of the transcription-specificity factor RAP94, is used for early gene expression.

Its subcellular location is the virion. The enzyme catalyses RNA(n) + a ribonucleoside 5'-triphosphate = RNA(n+1) + diphosphate. In terms of biological role, part of the DNA-dependent RNA polymerase which catalyzes the transcription of viral DNA into RNA using the four ribonucleoside triphosphates as substrates. Responsible for the transcription of early, intermediate and late genes. DNA-dependent RNA polymerase associates with the early transcription factor (ETF) thereby allowing the early genes transcription. Late transcription, and probably also intermediate transcription, require newly synthesized RNA polymerase. This is DNA-directed RNA polymerase 35 kDa subunit (RPO35) from Rabbitpox virus (strain Utrecht) (RPV).